The sequence spans 109 residues: Probable glutaredoxin slr1562 (109 aa).

A Glutaredoxin domain is found at 11 to 109 (LSGRQADGIK…PLLATPPNPA (99 aa)). Cys31 and Cys34 are joined by a disulfide.

This sequence belongs to the glutaredoxin family.

Its function is as follows. Has a glutathione-disulfide oxidoreductase activity in the presence of NADPH and glutathione reductase. Reduces low molecular weight disulfides and proteins. This Synechocystis sp. (strain ATCC 27184 / PCC 6803 / Kazusa) protein is Probable glutaredoxin slr1562.